The sequence spans 546 residues: MNPNTKIIFVTGGVVSSLGKGVTAASLATLLESRGLNVTMMKLDPYINVDPGTMSPLQHGEVFVTEDGAETDLDLGHYERFIRNKMTQASNFTTGKVYQSVLRRERKGDYLGATIQVIPHITDEIKRRVCEGIAEDVDVAIVEIGGTVGDIESQPFLEAIRQLRIELGRNRTLFVHLTLLPYIRVAGELKTKPTQHSVKELRGIGIQADVLVCRCEKRFDDSEKRKIALFTNVDQDCIFTAEDVDTIYEVPLRYNQQGFDAKLVELLNLNTKEADLSEWQNVVNTIRSTKGEVTIAMVGKYVSLTEAYKSLNEALYNAGYKNGVKVKIKFVDSEEVNDTNVESFFNDADAILVPGGFGSRGVEGKIASIKYARENQIPFLGICLGMQLAVVEYARNVLGIQDAHSSELNPSTTNPVIGLITEWQAEDGTIHQRTHDSDLGGTMRLGGYRCVLKAGSRAREIYQADEVIERHRHRYEVNNNYVDRLEDAGLIFSGRSEDNKLMELIEIPEHKWFIACQAHPEFTSTPRYGHKLFESYIHAAVEKSNK.

The interval 1–269 (MNPNTKIIFV…DAKLVELLNL (269 aa)) is amidoligase domain. S16 contributes to the CTP binding site. S16 serves as a coordination point for UTP. ATP contacts are provided by residues 17 to 22 (SLGKGV) and D74. Residues D74 and E143 each contribute to the Mg(2+) site. CTP contacts are provided by residues 150 to 152 (DIE), 190 to 195 (KTKPTQ), and K226. UTP-binding positions include 190 to 195 (KTKPTQ) and K226. The 253-residue stretch at 294–546 (TIAMVGKYVS…IHAAVEKSNK (253 aa)) folds into the Glutamine amidotransferase type-1 domain. An L-glutamine-binding site is contributed by G356. The active-site Nucleophile; for glutamine hydrolysis is C383. L-glutamine-binding positions include 384-387 (LGMQ), E407, and R474. Catalysis depends on residues H519 and E521.

This sequence belongs to the CTP synthase family. Homotetramer.

The catalysed reaction is UTP + L-glutamine + ATP + H2O = CTP + L-glutamate + ADP + phosphate + 2 H(+). It carries out the reaction L-glutamine + H2O = L-glutamate + NH4(+). It catalyses the reaction UTP + NH4(+) + ATP = CTP + ADP + phosphate + 2 H(+). Its pathway is pyrimidine metabolism; CTP biosynthesis via de novo pathway; CTP from UDP: step 2/2. Allosterically activated by GTP, when glutamine is the substrate; GTP has no effect on the reaction when ammonia is the substrate. The allosteric effector GTP functions by stabilizing the protein conformation that binds the tetrahedral intermediate(s) formed during glutamine hydrolysis. Inhibited by the product CTP, via allosteric rather than competitive inhibition. Functionally, catalyzes the ATP-dependent amination of UTP to CTP with either L-glutamine or ammonia as the source of nitrogen. Regulates intracellular CTP levels through interactions with the four ribonucleotide triphosphates. The protein is CTP synthase of Francisella philomiragia subsp. philomiragia (strain ATCC 25017 / CCUG 19701 / FSC 153 / O#319-036).